We begin with the raw amino-acid sequence, 340 residues long: DNA-directed RNA polymerase subunit alpha (340 aa).

Residues 1–233 (MYRNWRDLIS…EQLSIFINFD (233 aa)) are alpha N-terminal domain (alpha-NTD). The alpha C-terminal domain (alpha-CTD) stretch occupies residues 251-340 (VNENLYRSVD…RIRGERKDEE (90 aa)).

Belongs to the RNA polymerase alpha chain family. As to quaternary structure, homodimer. The RNAP catalytic core consists of 2 alpha, 1 beta, 1 beta' and 1 omega subunit. When a sigma factor is associated with the core the holoenzyme is formed, which can initiate transcription.

It catalyses the reaction RNA(n) + a ribonucleoside 5'-triphosphate = RNA(n+1) + diphosphate. Functionally, DNA-dependent RNA polymerase catalyzes the transcription of DNA into RNA using the four ribonucleoside triphosphates as substrates. This chain is DNA-directed RNA polymerase subunit alpha, found in Geobacter metallireducens (strain ATCC 53774 / DSM 7210 / GS-15).